A 149-amino-acid chain; its full sequence is MRAVVQKVKKSSVKVDGKVVGQIGKGINALIGITEGDTLEDIEYLKNKILNLRIFEDEEGKLNKSLKDVNGELLVISQFTLYGDCRRGRRPSFIEALSGDKSEKIYNDFVDLCRKEVPNVQTGVFGAHMDVDIQNDGPVTLLIDSKKVF.

Positions G137–P138 match the Gly-cisPro motif, important for rejection of L-amino acids motif.

Belongs to the DTD family. In terms of assembly, homodimer.

It is found in the cytoplasm. It catalyses the reaction glycyl-tRNA(Ala) + H2O = tRNA(Ala) + glycine + H(+). The catalysed reaction is a D-aminoacyl-tRNA + H2O = a tRNA + a D-alpha-amino acid + H(+). In terms of biological role, an aminoacyl-tRNA editing enzyme that deacylates mischarged D-aminoacyl-tRNAs. Also deacylates mischarged glycyl-tRNA(Ala), protecting cells against glycine mischarging by AlaRS. Acts via tRNA-based rather than protein-based catalysis; rejects L-amino acids rather than detecting D-amino acids in the active site. By recycling D-aminoacyl-tRNA to D-amino acids and free tRNA molecules, this enzyme counteracts the toxicity associated with the formation of D-aminoacyl-tRNA entities in vivo and helps enforce protein L-homochirality. The sequence is that of D-aminoacyl-tRNA deacylase from Clostridium acetobutylicum (strain ATCC 824 / DSM 792 / JCM 1419 / IAM 19013 / LMG 5710 / NBRC 13948 / NRRL B-527 / VKM B-1787 / 2291 / W).